We begin with the raw amino-acid sequence, 374 residues long: Ribosomal RNA large subunit methyltransferase G (374 aa).

This sequence belongs to the methyltransferase superfamily. RlmG family.

The protein resides in the cytoplasm. It carries out the reaction guanosine(1835) in 23S rRNA + S-adenosyl-L-methionine = N(2)-methylguanosine(1835) in 23S rRNA + S-adenosyl-L-homocysteine + H(+). Its function is as follows. Specifically methylates the guanine in position 1835 (m2G1835) of 23S rRNA. This Pseudomonas paraeruginosa (strain DSM 24068 / PA7) (Pseudomonas aeruginosa (strain PA7)) protein is Ribosomal RNA large subunit methyltransferase G.